The following is a 286-amino-acid chain: Acetylglutamate kinase (286 aa).

Residues 63–64 (GG), R85, and N178 contribute to the substrate site.

The protein belongs to the acetylglutamate kinase family. ArgB subfamily.

It localises to the cytoplasm. It catalyses the reaction N-acetyl-L-glutamate + ATP = N-acetyl-L-glutamyl 5-phosphate + ADP. Its pathway is amino-acid biosynthesis; L-arginine biosynthesis; N(2)-acetyl-L-ornithine from L-glutamate: step 2/4. Catalyzes the ATP-dependent phosphorylation of N-acetyl-L-glutamate. The chain is Acetylglutamate kinase from Clostridioides difficile (strain 630) (Peptoclostridium difficile).